The primary structure comprises 363 residues: Ethanolamine kinase 1 (363 aa).

The protein belongs to the choline/ethanolamine kinase family.

It localises to the cytoplasm. The enzyme catalyses ethanolamine + ATP = phosphoethanolamine + ADP + H(+). It participates in phospholipid metabolism; phosphatidylethanolamine biosynthesis; phosphatidylethanolamine from ethanolamine: step 1/3. Highly specific for ethanolamine phosphorylation. May be a rate-controlling step in phosphatidylethanolamine biosynthesis. This chain is Ethanolamine kinase 1 (Etnk1), found in Mus musculus (Mouse).